A 171-amino-acid chain; its full sequence is Glutamyl-tRNA(Gln) amidotransferase subunit F, mitochondrial (171 aa).

The protein belongs to the GatF family. As to quaternary structure, subunit of the heterotrimeric GatFAB amidotransferase (AdT) complex, composed of A, B and F subunits.

Its subcellular location is the mitochondrion inner membrane. It catalyses the reaction L-glutamyl-tRNA(Gln) + L-glutamine + ATP + H2O = L-glutaminyl-tRNA(Gln) + L-glutamate + ADP + phosphate + H(+). Allows the formation of correctly charged Gln-tRNA(Gln) through the transamidation of misacylated Glu-tRNA(Gln) in the mitochondria. The reaction takes place in the presence of glutamine and ATP through an activated gamma-phospho-Glu-tRNA(Gln). Required for proper protein synthesis within the mitochondrion. In Zygosaccharomyces rouxii (strain ATCC 2623 / CBS 732 / NBRC 1130 / NCYC 568 / NRRL Y-229), this protein is Glutamyl-tRNA(Gln) amidotransferase subunit F, mitochondrial.